The chain runs to 327 residues: Glycerol-3-phosphate dehydrogenase [NAD(P)+] (327 aa).

Residues W16, R36, and K108 each contribute to the NADPH site. Sn-glycerol 3-phosphate is bound by residues K108, G136, and S138. NADPH is bound at residue A140. The sn-glycerol 3-phosphate site is built by K191, D244, S254, R255, and N256. The active-site Proton acceptor is K191. Position 255 (R255) interacts with NADPH. NADPH-binding residues include L274 and E276.

It belongs to the NAD-dependent glycerol-3-phosphate dehydrogenase family.

The protein resides in the cytoplasm. The enzyme catalyses sn-glycerol 3-phosphate + NAD(+) = dihydroxyacetone phosphate + NADH + H(+). It carries out the reaction sn-glycerol 3-phosphate + NADP(+) = dihydroxyacetone phosphate + NADPH + H(+). It participates in membrane lipid metabolism; glycerophospholipid metabolism. Functionally, catalyzes the reduction of the glycolytic intermediate dihydroxyacetone phosphate (DHAP) to sn-glycerol 3-phosphate (G3P), the key precursor for phospholipid synthesis. The protein is Glycerol-3-phosphate dehydrogenase [NAD(P)+] of Bradyrhizobium sp. (strain ORS 278).